A 610-amino-acid chain; its full sequence is Elongation factor 4 (610 aa).

One can recognise a tr-type G domain in the interval 13-195; it reads SHIRNFSIVA…AIVHKLPAPK (183 aa). Residues 25–30 and 142–145 each bind GTP; these read DHGKST and NKID.

This sequence belongs to the TRAFAC class translation factor GTPase superfamily. Classic translation factor GTPase family. LepA subfamily.

It localises to the cell inner membrane. It catalyses the reaction GTP + H2O = GDP + phosphate + H(+). Its function is as follows. Required for accurate and efficient protein synthesis under certain stress conditions. May act as a fidelity factor of the translation reaction, by catalyzing a one-codon backward translocation of tRNAs on improperly translocated ribosomes. Back-translocation proceeds from a post-translocation (POST) complex to a pre-translocation (PRE) complex, thus giving elongation factor G a second chance to translocate the tRNAs correctly. Binds to ribosomes in a GTP-dependent manner. The chain is Elongation factor 4 from Rhizobium johnstonii (strain DSM 114642 / LMG 32736 / 3841) (Rhizobium leguminosarum bv. viciae).